A 291-amino-acid chain; its full sequence is Elongation factor Ts (291 aa).

The segment at 79-82 (TDFV) is involved in Mg(2+) ion dislocation from EF-Tu.

The protein belongs to the EF-Ts family.

It is found in the cytoplasm. In terms of biological role, associates with the EF-Tu.GDP complex and induces the exchange of GDP to GTP. It remains bound to the aminoacyl-tRNA.EF-Tu.GTP complex up to the GTP hydrolysis stage on the ribosome. In Ruegeria sp. (strain TM1040) (Silicibacter sp.), this protein is Elongation factor Ts.